The following is a 552-amino-acid chain: Probable bifunctional methylthioribose-1-phosphate isomerase/methylthioribulose-1-phosphate dehydratase (552 aa).

A methylthioribose-1-phosphate isomerase activity region spans residues 1-333 (MRPIDDSSLT…VVTEHGVVHG (333 aa)). Residues 49–51 (RGA), arginine 91, and glutamine 195 each bind substrate. Catalysis depends on aspartate 236, which acts as the Proton donor. A substrate-binding site is contributed by 246–247 (NK). Positions 334–535 (TVAAEPGARI…AVCELVLRTG (202 aa)) are methylthioribulose-1-phosphate dehydratase activity. Zn(2+)-binding residues include histidine 427 and histidine 429.

In the N-terminal section; belongs to the eIF-2B alpha/beta/delta subunits family. MtnA subfamily. It in the C-terminal section; belongs to the aldolase class II family. MtnB subfamily. The cofactor is Zn(2+).

The enzyme catalyses 5-(methylsulfanyl)-alpha-D-ribose 1-phosphate = 5-(methylsulfanyl)-D-ribulose 1-phosphate. It catalyses the reaction 5-(methylsulfanyl)-D-ribulose 1-phosphate = 5-methylsulfanyl-2,3-dioxopentyl phosphate + H2O. Its pathway is amino-acid biosynthesis; L-methionine biosynthesis via salvage pathway; L-methionine from S-methyl-5-thio-alpha-D-ribose 1-phosphate: step 1/6. The protein operates within amino-acid biosynthesis; L-methionine biosynthesis via salvage pathway; L-methionine from S-methyl-5-thio-alpha-D-ribose 1-phosphate: step 2/6. Its function is as follows. Bifunctional protein that catalyzes the interconversion of methylthioribose-1-phosphate (MTR-1-P) into methylthioribulose-1-phosphate (MTRu-1-P), and the dehydration of methylthioribulose-1-phosphate (MTRu-1-P) into 2,3-diketo-5-methylthiopentyl-1-phosphate (DK-MTP-1-P). This Nocardia farcinica (strain IFM 10152) protein is Probable bifunctional methylthioribose-1-phosphate isomerase/methylthioribulose-1-phosphate dehydratase (mtnAB).